A 472-amino-acid polypeptide reads, in one-letter code: Probable sterol O-acyltransferase 2 (472 aa).

The residue at position 12 (Ser-12) is a Phosphoserine. Helical transmembrane passes span 61-81, 111-131, and 135-155; these read FTGF…MSFL, LAMS…ALGY, and YGLG…HCVL. Asn-161 is a glycosylation site (N-linked (GlcNAc...) asparagine). The chain crosses the membrane as a helical span at residues 170 to 190; that stretch reads FILHSMVILMKLHSYNVVNGW. N-linked (GlcNAc...) asparagine glycosylation is present at Asn-233. Helical transmembrane passes span 262-282 and 317-337; these read IHYL…LVII and TVAF…WVIF. N-linked (GlcNAc...) asparagine glycosylation is present at Asn-342. The FYXDWWN motif motif lies at 355–361; sequence FYDDWWN. His-409 is an active-site residue. Residues 452–472 form a helical membrane-spanning segment; that stretch reads IAFWFSIIIGIALIAALYILF.

It belongs to the membrane-bound acyltransferase family. Sterol o-acyltransferase subfamily.

It localises to the endoplasmic reticulum membrane. Sterol O-acyltransferase that catalyzes the formation of stery esters. This chain is Probable sterol O-acyltransferase 2 (are2), found in Schizosaccharomyces pombe (strain 972 / ATCC 24843) (Fission yeast).